Reading from the N-terminus, the 213-residue chain is Ribosomal RNA small subunit methyltransferase G (213 aa).

S-adenosyl-L-methionine contacts are provided by residues Gly75, Phe80, 128–129, and Arg144; that span reads IE.

It belongs to the methyltransferase superfamily. RNA methyltransferase RsmG family.

The protein localises to the cytoplasm. The catalysed reaction is guanosine(527) in 16S rRNA + S-adenosyl-L-methionine = N(7)-methylguanosine(527) in 16S rRNA + S-adenosyl-L-homocysteine. Functionally, specifically methylates the N7 position of guanine in position 527 of 16S rRNA. This chain is Ribosomal RNA small subunit methyltransferase G, found in Brucella ovis (strain ATCC 25840 / 63/290 / NCTC 10512).